Reading from the N-terminus, the 307-residue chain is MSITAAQVKELRELSGAGMMDCKAALADTNGDMEAAVDWLRKKGIAKADKKAGRTAAEGLIGIVSKDTSAVLVEINSETDFVARNDLFQDIVRNVATAALDTQGNVESVSASFYPGSEKTVEATIKDAISTIGENMTFRRSAKLSVKDGVVATYIHSKVAEGLGKLGVLVAVETTGNKEAAAVFGRQVAMHIAATNPLALTAEDVDSGAVEREKAIFSDQARQSGKPENIIEKMVEGRLRKFFEEVVLLSQAFVMNPDITVEAALKDAEKSIGAPARITGFIRFALGEGVEKKESNFAAEVAAAAKG.

Residues 79–82 form an involved in Mg(2+) ion dislocation from EF-Tu region; that stretch reads TDFV.

Belongs to the EF-Ts family.

It is found in the cytoplasm. Its function is as follows. Associates with the EF-Tu.GDP complex and induces the exchange of GDP to GTP. It remains bound to the aminoacyl-tRNA.EF-Tu.GTP complex up to the GTP hydrolysis stage on the ribosome. In Bartonella quintana (strain Toulouse) (Rochalimaea quintana), this protein is Elongation factor Ts (tsf).